Consider the following 471-residue polypeptide: Adenosylhomocysteinase (471 aa).

Positions 60, 135, and 196 each coordinate substrate. Residue 197-199 (TTT) coordinates NAD(+). Substrate contacts are provided by Lys226 and Asp230. NAD(+) is bound by residues Asn231, 260–265 (GYGDVG), Glu283, Asn318, 339–341 (IGH), and Asn387.

The protein belongs to the adenosylhomocysteinase family. NAD(+) is required as a cofactor.

Its subcellular location is the cytoplasm. It carries out the reaction S-adenosyl-L-homocysteine + H2O = L-homocysteine + adenosine. Its pathway is amino-acid biosynthesis; L-homocysteine biosynthesis; L-homocysteine from S-adenosyl-L-homocysteine: step 1/1. In terms of biological role, may play a key role in the regulation of the intracellular concentration of adenosylhomocysteine. In Pelodictyon phaeoclathratiforme (strain DSM 5477 / BU-1), this protein is Adenosylhomocysteinase.